We begin with the raw amino-acid sequence, 283 residues long: Thymidylate synthase (283 aa).

Residue Arg22 participates in dUMP binding. The active-site Nucleophile is Cys160. Residues 180–183 (RSCD), Asn191, and 221–223 (HIY) each bind dUMP. A (6R)-5,10-methylene-5,6,7,8-tetrahydrofolate-binding site is contributed by Asp183. A (6R)-5,10-methylene-5,6,7,8-tetrahydrofolate-binding site is contributed by Ala282.

It belongs to the thymidylate synthase family. Bacterial-type ThyA subfamily. In terms of assembly, homodimer.

The protein localises to the cytoplasm. The enzyme catalyses dUMP + (6R)-5,10-methylene-5,6,7,8-tetrahydrofolate = 7,8-dihydrofolate + dTMP. It participates in pyrimidine metabolism; dTTP biosynthesis. In terms of biological role, catalyzes the reductive methylation of 2'-deoxyuridine-5'-monophosphate (dUMP) to 2'-deoxythymidine-5'-monophosphate (dTMP) while utilizing 5,10-methylenetetrahydrofolate (mTHF) as the methyl donor and reductant in the reaction, yielding dihydrofolate (DHF) as a by-product. This enzymatic reaction provides an intracellular de novo source of dTMP, an essential precursor for DNA biosynthesis. This is Thymidylate synthase from Shewanella frigidimarina (strain NCIMB 400).